The sequence spans 568 residues: Vitamin H transporter 1 (568 aa).

A run of 12 helical transmembrane segments spans residues 85–105 (IIPC…TVSL), 123–143 (GYSA…YIIF), 158–178 (IWVS…AVLG), 187–207 (YVAL…GLAY), 222–242 (IGWY…VSAG), 257–277 (WMFL…PWWL), 345–365 (VWPF…IFNY), 384–404 (LLNA…MPLY), 411–431 (FSFF…ANYA), 439–459 (GGLL…MAWC), 470–490 (VGVA…SVVT), and 508–528 (NDVC…EFLL). The segment at 547–568 (VEDEQEMTDIKPALPSSQQADA) is disordered.

It belongs to the major facilitator superfamily. Allantoate permease family.

It is found in the membrane. In terms of biological role, involved in uptake of biotin and desthiobiotin with the concomitant entry of protons. In Schizosaccharomyces pombe (strain 972 / ATCC 24843) (Fission yeast), this protein is Vitamin H transporter 1 (vht1).